The chain runs to 1411 residues: DNA-directed RNA polymerase subunit beta' (1411 aa).

4 residues coordinate Zn(2+): C69, C71, C84, and C87. Positions 461, 463, and 465 each coordinate Mg(2+). Positions 809, 883, 890, and 893 each coordinate Zn(2+).

It belongs to the RNA polymerase beta' chain family. In terms of assembly, the RNAP catalytic core consists of 2 alpha, 1 beta, 1 beta' and 1 omega subunit. When a sigma factor is associated with the core the holoenzyme is formed, which can initiate transcription. Requires Mg(2+) as cofactor. Zn(2+) is required as a cofactor.

The enzyme catalyses RNA(n) + a ribonucleoside 5'-triphosphate = RNA(n+1) + diphosphate. DNA-dependent RNA polymerase catalyzes the transcription of DNA into RNA using the four ribonucleoside triphosphates as substrates. The protein is DNA-directed RNA polymerase subunit beta' of Ehrlichia ruminantium (strain Welgevonden).